Here is a 616-residue protein sequence, read N- to C-terminus: ATP-dependent zinc metalloprotease FtsH 3 (616 aa).

Residues 1–9 lie on the Cytoplasmic side of the membrane; the sequence is MSKNNKKWR. The chain crosses the membrane as a helical span at residues 10 to 30; it reads NAGLYALLLIVVLALASAFFD. The Lumenal portion of the chain corresponds to 31–108; sequence RPTQTRETLS…VQPQSDEGFW (78 aa). Residues 109 to 129 traverse the membrane as a helical segment; it reads FRIASTLFLPILLLVGIFFLF. The Cytoplasmic portion of the chain corresponds to 130–616; that stretch reads RRAQSGPGSQ…NNNAKLALLV (487 aa). An ATP-binding site is contributed by 201–208; the sequence is GPPGTGKT. H423 provides a ligand contact to Zn(2+). Residue E424 is part of the active site. Positions 427 and 504 each coordinate Zn(2+).

This sequence in the central section; belongs to the AAA ATPase family. It in the C-terminal section; belongs to the peptidase M41 family. In terms of assembly, homohexamer (Potential). Part of a large complex that includes FtsH2 and PSII. Coimmunoprecipitates with YidC. Requires Zn(2+) as cofactor.

Its subcellular location is the cellular thylakoid membrane. Acts as a processive, ATP-dependent zinc metallopeptidase for both cytoplasmic and membrane proteins. Plays a role in the quality control of integral membrane proteins. This chain is ATP-dependent zinc metalloprotease FtsH 3, found in Synechocystis sp. (strain ATCC 27184 / PCC 6803 / Kazusa).